Here is a 100-residue protein sequence, read N- to C-terminus: Gas vesicle protein J (100 aa).

It belongs to the gas vesicle GvpA family. As to quaternary structure, interacts with GvpA.

Its subcellular location is the gas vesicle. Functionally, a minor component of the gas vesicle, might be involved in nucleating gas vesicle formation. This protein could be important for the shape determination of the gas vesicle. Gas vesicles (GV) are hollow, gas filled proteinaceous nanostructures. During planktonic growth they allow positioning of the organism at a favorable depth for light or nutrient acquisition. In terms of biological role, when a minimal gvp locus (gvpA2-gvpR-gvpN-gvpF-gvpG-gvpL-gvpS-gvpK-gvpJ-gvpT-gvpU, called pNL29) is expressed in E.coli gas vesicles are made. The protein is Gas vesicle protein J of Priestia megaterium (Bacillus megaterium).